The following is a 331-amino-acid chain: Ketol-acid reductoisomerase (NADP(+)) (331 aa).

Residues 2–181 enclose the KARI N-terminal Rossmann domain; that stretch reads TKVYYEDAVK…GATRAGVIET (180 aa). Residues 25 to 28, Arg48, Ser52, and 82 to 85 contribute to the NADP(+) site; these read YGSQ and DETQ. His107 is a catalytic residue. An NADP(+)-binding site is contributed by Gly133. Residues 182 to 327 form the KARI C-terminal knotted domain; the sequence is TFKEETETDL…AELREMMPFV (146 aa). Positions 190, 194, 226, and 230 each coordinate Mg(2+). Ser251 contributes to the substrate binding site.

This sequence belongs to the ketol-acid reductoisomerase family. Mg(2+) is required as a cofactor.

The enzyme catalyses (2R)-2,3-dihydroxy-3-methylbutanoate + NADP(+) = (2S)-2-acetolactate + NADPH + H(+). It catalyses the reaction (2R,3R)-2,3-dihydroxy-3-methylpentanoate + NADP(+) = (S)-2-ethyl-2-hydroxy-3-oxobutanoate + NADPH + H(+). It participates in amino-acid biosynthesis; L-isoleucine biosynthesis; L-isoleucine from 2-oxobutanoate: step 2/4. Its pathway is amino-acid biosynthesis; L-valine biosynthesis; L-valine from pyruvate: step 2/4. In terms of biological role, involved in the biosynthesis of branched-chain amino acids (BCAA). Catalyzes an alkyl-migration followed by a ketol-acid reduction of (S)-2-acetolactate (S2AL) to yield (R)-2,3-dihydroxy-isovalerate. In the isomerase reaction, S2AL is rearranged via a Mg-dependent methyl migration to produce 3-hydroxy-3-methyl-2-ketobutyrate (HMKB). In the reductase reaction, this 2-ketoacid undergoes a metal-dependent reduction by NADPH to yield (R)-2,3-dihydroxy-isovalerate. This Listeria innocua serovar 6a (strain ATCC BAA-680 / CLIP 11262) protein is Ketol-acid reductoisomerase (NADP(+)).